We begin with the raw amino-acid sequence, 82 residues long: DNA-directed RNA polymerase subunit Rpo5 (82 aa).

The protein belongs to the archaeal Rpo5/eukaryotic RPB5 RNA polymerase subunit family. In terms of assembly, part of the RNA polymerase complex.

It is found in the cytoplasm. The catalysed reaction is RNA(n) + a ribonucleoside 5'-triphosphate = RNA(n+1) + diphosphate. Functionally, DNA-dependent RNA polymerase (RNAP) catalyzes the transcription of DNA into RNA using the four ribonucleoside triphosphates as substrates. This chain is DNA-directed RNA polymerase subunit Rpo5, found in Thermococcus onnurineus (strain NA1).